A 233-amino-acid chain; its full sequence is MKKTIMASSLAVALGVTGYAAGTGHQAHAAEVNVDQAHLVDLAHNHQDQLNAAPIKDGAYDIHFVKDGFQYNFTSNGTTWSWSYEAANGQTAGFSNVAGADYTTSYNQGSDVQSVSYNAQSSNSNVEAVSAPTYHNYSTSTTSSSVRLSNGNTAGATGSSAAQIMAQRTGVSASTWAAIIARESNGQVNAYNPSGASGLFQTMPGWGPTNTVDQQINAAVKAYKAQGLGAWGF.

An N-terminal signal peptide occupies residues Met1 to Ala29.

The protein belongs to the transglycosylase family. IsaA subfamily.

It is found in the secreted. In terms of biological role, is able to cleave peptidoglycan. In Staphylococcus aureus (strain Mu3 / ATCC 700698), this protein is Probable transglycosylase IsaA (isaA).